The chain runs to 131 residues: MSEIPGDLKFLKSHEWARVESDGRVTVGISDHAQGLLGDLVYVELPGVGDTVQVGNGAAVVESVKAASDVYSPVSGTVVEVNSALSDKPETINEDAYGEGWIFVVEIDDKEQLNDLLDPDDYAELLEDDDH.

Residues Arg-24–Glu-106 form the Lipoyl-binding domain. Lys-65 carries the post-translational modification N6-lipoyllysine.

Belongs to the GcvH family. In terms of assembly, the glycine cleavage system is composed of four proteins: P, T, L and H. It depends on (R)-lipoate as a cofactor.

In terms of biological role, the glycine cleavage system catalyzes the degradation of glycine. The H protein shuttles the methylamine group of glycine from the P protein to the T protein. The protein is Glycine cleavage system H protein of Xanthomonas euvesicatoria pv. vesicatoria (strain 85-10) (Xanthomonas campestris pv. vesicatoria).